The chain runs to 291 residues: tRNA U34 carboxymethyltransferase (291 aa).

Carboxy-S-adenosyl-L-methionine is bound by residues lysine 61, tryptophan 75, lysine 80, glycine 100, 122–124 (DPS), 149–150 (VE), tyrosine 169, and arginine 284.

Belongs to the class I-like SAM-binding methyltransferase superfamily. CmoB family. Homotetramer.

The enzyme catalyses carboxy-S-adenosyl-L-methionine + 5-hydroxyuridine(34) in tRNA = 5-carboxymethoxyuridine(34) in tRNA + S-adenosyl-L-homocysteine + H(+). Catalyzes carboxymethyl transfer from carboxy-S-adenosyl-L-methionine (Cx-SAM) to 5-hydroxyuridine (ho5U) to form 5-carboxymethoxyuridine (cmo5U) at position 34 in tRNAs. This is tRNA U34 carboxymethyltransferase from Campylobacter jejuni subsp. jejuni serotype O:2 (strain ATCC 700819 / NCTC 11168).